We begin with the raw amino-acid sequence, 151 residues long: Ribonuclease H (151 aa).

Residues 1–141 enclose the RNase H type-1 domain; the sequence is MQEVTVYSDG…ADALANKGVE (141 aa). The Mg(2+) site is built by Asp9, Glu47, Asp69, and Asp133.

Belongs to the RNase H family. Monomer. Requires Mg(2+) as cofactor.

Its subcellular location is the cytoplasm. The enzyme catalyses Endonucleolytic cleavage to 5'-phosphomonoester.. In terms of biological role, endonuclease that specifically degrades the RNA of RNA-DNA hybrids. The polypeptide is Ribonuclease H (Ralstonia nicotianae (strain ATCC BAA-1114 / GMI1000) (Ralstonia solanacearum)).